The chain runs to 614 residues: Acetylcholinesterase (614 aa).

A signal peptide spans 1–31 (MRPPQCLLHTPSLASPLLLLLLWLLGGGVGA). A disulfide bond links Cys-100 and Cys-127. Trp-117 lines the galanthamine pocket. Residue Trp-117 participates in huperzine A binding. Gly-153 lines the huprine W pocket. Position 164 (Tyr-164) interacts with huperzine A. A galanthamine-binding site is contributed by 233 to 234 (ES). Residue Ser-234 coordinates huprine W. The active-site Acyl-ester intermediate is Ser-234. Cys-288 and Cys-303 are joined by a disulfide. Residue Asn-296 is glycosylated (N-linked (GlcNAc...) asparagine). The Charge relay system role is filled by Glu-365. Residue Tyr-368 participates in galanthamine binding. Tyr-368 is a binding site for huperzine A. The N-linked (GlcNAc...) asparagine glycan is linked to Asn-381. The cysteines at positions 440 and 560 are disulfide-linked. Huprine W-binding residues include Trp-470 and His-478. Residue His-478 is the Charge relay system of the active site. Asn-495 carries N-linked (GlcNAc...) asparagine glycosylation. Phe-588 carries the GPI-anchor amidated glycine lipid modification.

This sequence belongs to the type-B carboxylesterase/lipase family. As to quaternary structure, interacts with PRIMA1. The interaction with PRIMA1 is required to anchor it to the basal lamina of cells and organize into tetramers. Isoform H generates GPI-anchored dimers; disulfide linked. Isoform T generates multiple structures, ranging from monomers and dimers to collagen-tailed and hydrophobic-tailed forms, in which catalytic tetramers are associated with anchoring proteins that attach them to the basal lamina or to cell membranes. In the collagen-tailed forms, isoform T subunits are associated with a specific collagen, COLQ, which triggers the formation of isoform T tetramers, from monomers and dimers. Isoform R may be monomeric. As to expression, isoform H is highly expressed in erythrocytes.

Its subcellular location is the synapse. It localises to the secreted. It is found in the cell membrane. The protein resides in the nucleus. The catalysed reaction is acetylcholine + H2O = choline + acetate + H(+). Its function is as follows. Hydrolyzes rapidly the acetylcholine neurotransmitter released into the synaptic cleft allowing to terminate the signal transduction at the neuromuscular junction. Role in neuronal apoptosis. In Homo sapiens (Human), this protein is Acetylcholinesterase.